A 539-amino-acid chain; its full sequence is uncharacterized protein (539 aa).

2 consecutive ABC transporter domains span residues 8–265 and 307–537; these read VRIT…SRAL and IELD…IGDM. 339–346 lines the ATP pocket; sequence GDNGSGKS.

It belongs to the ABC transporter superfamily.

It localises to the mitochondrion. This is an uncharacterized protein from Saccharomyces cerevisiae (strain ATCC 204508 / S288c) (Baker's yeast).